Consider the following 426-residue polypeptide: Phosphomethylpyrimidine synthase (426 aa).

Residues asparagine 65, methionine 94, tyrosine 123, histidine 162, 184 to 186, 225 to 228, and glutamate 264 each bind substrate; these read SRG and DGMR. Histidine 268 serves as a coordination point for Zn(2+). Tyrosine 291 serves as a coordination point for substrate. Histidine 332 is a Zn(2+) binding site. Positions 408, 411, and 415 each coordinate [4Fe-4S] cluster.

It belongs to the ThiC family. It depends on [4Fe-4S] cluster as a cofactor.

It carries out the reaction 5-amino-1-(5-phospho-beta-D-ribosyl)imidazole + S-adenosyl-L-methionine = 4-amino-2-methyl-5-(phosphooxymethyl)pyrimidine + CO + 5'-deoxyadenosine + formate + L-methionine + 3 H(+). Its pathway is cofactor biosynthesis; thiamine diphosphate biosynthesis. In terms of biological role, catalyzes the synthesis of the hydroxymethylpyrimidine phosphate (HMP-P) moiety of thiamine from aminoimidazole ribotide (AIR) in a radical S-adenosyl-L-methionine (SAM)-dependent reaction. The chain is Phosphomethylpyrimidine synthase from Methanococcus vannielii (strain ATCC 35089 / DSM 1224 / JCM 13029 / OCM 148 / SB).